The following is a 237-amino-acid chain: Phosphatidylserine decarboxylase proenzyme (237 aa).

S206 functions as the Schiff-base intermediate with substrate; via pyruvic acid in the catalytic mechanism. S206 carries the pyruvic acid (Ser); by autocatalysis modification.

Belongs to the phosphatidylserine decarboxylase family. PSD-A subfamily. Heterodimer of a large membrane-associated beta subunit and a small pyruvoyl-containing alpha subunit. Pyruvate serves as cofactor. Post-translationally, is synthesized initially as an inactive proenzyme. Formation of the active enzyme involves a self-maturation process in which the active site pyruvoyl group is generated from an internal serine residue via an autocatalytic post-translational modification. Two non-identical subunits are generated from the proenzyme in this reaction, and the pyruvate is formed at the N-terminus of the alpha chain, which is derived from the carboxyl end of the proenzyme. The post-translation cleavage follows an unusual pathway, termed non-hydrolytic serinolysis, in which the side chain hydroxyl group of the serine supplies its oxygen atom to form the C-terminus of the beta chain, while the remainder of the serine residue undergoes an oxidative deamination to produce ammonia and the pyruvoyl prosthetic group on the alpha chain.

It is found in the cell membrane. The enzyme catalyses a 1,2-diacyl-sn-glycero-3-phospho-L-serine + H(+) = a 1,2-diacyl-sn-glycero-3-phosphoethanolamine + CO2. The protein operates within phospholipid metabolism; phosphatidylethanolamine biosynthesis; phosphatidylethanolamine from CDP-diacylglycerol: step 2/2. Its function is as follows. Catalyzes the formation of phosphatidylethanolamine (PtdEtn) from phosphatidylserine (PtdSer). This is Phosphatidylserine decarboxylase proenzyme from Rhodococcus erythropolis (strain PR4 / NBRC 100887).